We begin with the raw amino-acid sequence, 227 residues long: Isoprenyl transferase (227 aa).

Residue Asp-13 is part of the active site. Asp-13 contacts Mg(2+). Residues 14–17 (GNGR), Trp-18, Arg-26, His-30, and 58–60 (STE) contribute to the substrate site. Asn-61 acts as the Proton acceptor in catalysis. Substrate contacts are provided by residues Trp-62, Arg-64, Arg-175, and 181–183 (RLS). Residue Glu-194 participates in Mg(2+) binding.

This sequence belongs to the UPP synthase family. Homodimer. Mg(2+) serves as cofactor.

Functionally, catalyzes the condensation of isopentenyl diphosphate (IPP) with allylic pyrophosphates generating different type of terpenoids. This Treponema denticola (strain ATCC 35405 / DSM 14222 / CIP 103919 / JCM 8153 / KCTC 15104) protein is Isoprenyl transferase.